Here is a 1010-residue protein sequence, read N- to C-terminus: Pre-mRNA-splicing factor cwc22 (1010 aa).

The segment covering 1 to 10 has biased composition (polar residues); it reads MASADMSPSR. A disordered region spans residues 1–166; that stretch reads MASADMSPSR…RTPTPPPVAV (166 aa). The span at 18–28 shows a compositional bias: low complexity; that stretch reads RSPSPRTQSPS. 2 stretches are compositionally biased toward basic and acidic residues: residues 29–39 and 65–78; these read PRDEDGSRSPG and PRRD…DQPH. A compositionally biased stretch (low complexity) spans 84–109; the sequence is RSPTPRSQSPSRRSVRSPSPRQGSPA. A compositionally biased stretch (basic and acidic residues) spans 142-158; sequence RHRDAGGDYRPVRKERT. Residues 222 to 405 enclose the MIF4G domain; sequence KKSVNGLVNK…EVLFQVRKDK (184 aa). Residues 466–498 form a disordered region; that stretch reads GEASDDDEDDDDDDESESGSESEDEEQKALEIK. Residues 468–491 are compositionally biased toward acidic residues; the sequence is ASDDDEDDDDDDESESGSESEDEE. The MI domain maps to 507–623; it reads NLRRTIYLSI…GWHVFSVIHL (117 aa). Residues 708-1010 are disordered; it reads LPAPPADSDS…SPVAKRGRVD (303 aa). Low complexity predominate over residues 718-732; the sequence is ESVSSYSSYSSYSSR. The segment covering 753-775 has biased composition (basic residues); sequence PPRRGRGRSYSRTPSRSRSRSRS. A compositionally biased stretch (low complexity) spans 776–787; it reads YSRSVSKSVSRS. Composition is skewed to basic residues over residues 834–846 and 899–910; these read RRGR…RSRS and RLRRGSYSRSRS. The segment covering 911 to 935 has biased composition (low complexity); the sequence is RSPIPIRGNGPAGRDTGRAGPAPAR. Positions 936-948 are enriched in basic residues; that stretch reads GGRRNRSYSRSRT. Over residues 961–973 the composition is skewed to low complexity; that stretch reads SRRVVSRSPSPVV. Residues 976–1010 are compositionally biased toward basic residues; that stretch reads NKRRRSYSSSRSRSRSSSRSRYRSRSPVAKRGRVD.

The protein belongs to the CWC22 family. In terms of assembly, associated with the spliceosome.

The protein resides in the cytoplasm. It localises to the nucleus. In terms of biological role, involved in pre-mRNA splicing. In Neurospora crassa (strain ATCC 24698 / 74-OR23-1A / CBS 708.71 / DSM 1257 / FGSC 987), this protein is Pre-mRNA-splicing factor cwc22 (msp-1).